The following is a 397-amino-acid chain: Class V chitinase CHIT5 (397 aa).

An N-terminal signal peptide occupies residues 1-18 (MIIKLLVALIHYLHETMA). One can recognise a GH18 domain in the interval 54-397 (GVRAAYWPAW…SKQASNAWGY (344 aa)). Residues Asn128 and Asn147 are each glycosylated (N-linked (GlcNAc...) asparagine). Glu166 serves as the catalytic Proton donor. N-linked (GlcNAc...) asparagine glycosylation is found at Asn193, Asn209, Asn247, and Asn261.

This sequence belongs to the glycosyl hydrolase 18 family. Chitinase class V subfamily.

It carries out the reaction Random endo-hydrolysis of N-acetyl-beta-D-glucosaminide (1-&gt;4)-beta-linkages in chitin and chitodextrins.. It participates in glycan degradation; chitin degradation. Functionally, possesses chitinase activity in vitro toward glycol chitin, carboxymethyl-chitin, colloidal chitin, and the chitin oligosaccharides (N-acetylglucosamine) (GlcNAc)6 and (GlcNAc)5. Hydrolyzes (GlcNAc)6 into (GlcNAc)4 and (GlcNAc)2, or two (GlcNAc)3 molecules. Has the capacity to inhibit hyphal growth of the fungus Trichoderma viride in an agar-plate bioassay. Involved in symbiotic signaling. Required for root hair infection threads (ITs) elongation and nodule development. Possesses Nod factor (NF) hydrolase activity. NFs are lipo-chitooligosaccharide signaling molecules produced by nitrogen-fixing rhizobia to initiate nodulation (symbiosis) on the roots of legumes. Modulates NF levels and signaling to complete transition of infected nodules to functional nitrogen-fixing organs. The protein is Class V chitinase CHIT5 of Lotus japonicus (Lotus corniculatus var. japonicus).